Reading from the N-terminus, the 159-residue chain is Probable acetolactate synthase small subunit (159 aa).

The region spanning 4 to 78 (TIAVLVENKP…ETIKVSEITE (75 aa)) is the ACT domain.

It belongs to the acetolactate synthase small subunit family. Dimer of large and small chains.

It catalyses the reaction 2 pyruvate + H(+) = (2S)-2-acetolactate + CO2. Its pathway is amino-acid biosynthesis; L-isoleucine biosynthesis; L-isoleucine from 2-oxobutanoate: step 1/4. It functions in the pathway amino-acid biosynthesis; L-valine biosynthesis; L-valine from pyruvate: step 1/4. The sequence is that of Probable acetolactate synthase small subunit (ilvH) from Archaeoglobus fulgidus (strain ATCC 49558 / DSM 4304 / JCM 9628 / NBRC 100126 / VC-16).